The chain runs to 910 residues: Myelin regulatory factor-like protein (910 aa).

The NDT80 DNA-binding region spans 142-405 (GCSYPQQPLC…SNPGQFENDS (264 aa)). Residues 189-208 (RSRSSEVQDPDSEGQNRMPT) are disordered. One can recognise a Peptidase S74 domain in the interval 451–559 (SDSRAKQNIQ…KLTNNLEERI (109 aa)). Positions 543–575 (GAVKQLCKLTNNLEERIEELEIWNRKLARLKRL) form a coiled coil. A helical membrane pass occupies residues 628 to 648 (LVITLIAVMAFCALTIVALYI). Positions 661 to 682 (LPPSNITSSQEPALLPTASSSA) are disordered. Residues 663–682 (PSNITSSQEPALLPTASSSA) show a composition bias toward polar residues.

Belongs to the MRF family.

The protein localises to the membrane. In Homo sapiens (Human), this protein is Myelin regulatory factor-like protein (MYRFL).